Reading from the N-terminus, the 943-residue chain is Conidiophore development regulator abaA (943 aa).

Disordered regions lie at residues 1 to 69 and 111 to 133; these read MSSS…FNGG and TSRQ…HQRG. Positions 29–43 are enriched in basic and acidic residues; that stretch reads IDTRRSFHGDSRLPL. Residues 59–68 are compositionally biased toward polar residues; the sequence is PSSAHSSFNG. Positions 161–254 form a DNA-binding region, TEA; it reads QKDKGGVWRR…QVVKKFFEDL (94 aa). The segment covering 537–555 has biased composition (basic and acidic residues); it reads EHQRKKEKRSCGKKPDLER. Disordered regions lie at residues 537–575 and 809–901; these read EHQR…AAWT and GAAG…HHPG. The span at 865-889 shows a compositional bias: low complexity; the sequence is DSWTAGSSAGGAPAATPTGPDWGPT.

This sequence belongs to the TEC1 family.

The protein resides in the nucleus. Its function is as follows. BrlA, abaA and wetA are pivotal regulators of conidiophore development and conidium maturation. They act individually and together to regulate their own expression and that of numerous other sporulation-specific genes. Binds to the sequence 5'-CATTCY-3', where Y is a pyrimidine, making both major- and minor-groove contacts. This Hapsidospora chrysogena (Acremonium chrysogenum) protein is Conidiophore development regulator abaA.